Reading from the N-terminus, the 444-residue chain is Pre-mRNA-splicing factor cwc25 (444 aa).

3 disordered regions span residues 1–27, 168–385, and 397–425; these read MGSG…QKAE, LASM…TDLD, and EAER…GFMS. Residues 19 to 65 adopt a coiled-coil conformation; the sequence is NVAATQKAEAEAIAERKKLQQRLQEIEEERRKEEIQKALEAAGGKRK. Residues 186–199 are compositionally biased toward basic residues; that stretch reads QRRHKHRSHHHRSD. Composition is skewed to basic and acidic residues over residues 200 to 220 and 228 to 281; these read RHRD…DRDR and DSRD…DDRS. Residues 282 to 293 are compositionally biased toward basic residues; it reads RRHRFPQGRSRS. Composition is skewed to basic and acidic residues over residues 305–344, 360–372, and 397–410; these read RREY…EQPK, DGDH…ERAK, and EAER…EKAR. Residues 364 to 417 are a coiled coil; sequence KNAEEERAKKLAAMQAAATDLDKAREERLKALAEAERAEREADEKARQQNKKFR.

It belongs to the CWC25 family. Associated with the spliceosome.

It localises to the nucleus. Its function is as follows. Involved in pre-mRNA splicing. This Neurospora crassa (strain ATCC 24698 / 74-OR23-1A / CBS 708.71 / DSM 1257 / FGSC 987) protein is Pre-mRNA-splicing factor cwc25 (msp-6).